The chain runs to 123 residues: Ribulose bisphosphate carboxylase small subunit, chloroplastic 1 (123 aa).

Met1 is subject to Methionine derivative.

This sequence belongs to the RuBisCO small chain family. In terms of assembly, heterohexadecamer of 8 large and 8 small subunits.

The protein resides in the plastid. The protein localises to the chloroplast. RuBisCO catalyzes two reactions: the carboxylation of D-ribulose 1,5-bisphosphate, the primary event in carbon dioxide fixation, as well as the oxidative fragmentation of the pentose substrate. Both reactions occur simultaneously and in competition at the same active site. Although the small subunit is not catalytic it is essential for maximal activity. In Spinacia oleracea (Spinach), this protein is Ribulose bisphosphate carboxylase small subunit, chloroplastic 1.